Reading from the N-terminus, the 159-residue chain is RNA pyrophosphohydrolase (159 aa).

The Nudix hydrolase domain maps to 6-149 (GFRPNVGIIL…KREVYRRALK (144 aa)). Residues 38–59 (GGINPDETPEDALYRELNEEVG) carry the Nudix box motif.

This sequence belongs to the Nudix hydrolase family. RppH subfamily. The cofactor is a divalent metal cation.

Its function is as follows. Accelerates the degradation of transcripts by removing pyrophosphate from the 5'-end of triphosphorylated RNA, leading to a more labile monophosphorylated state that can stimulate subsequent ribonuclease cleavage. The polypeptide is RNA pyrophosphohydrolase (Pseudomonas fluorescens (strain SBW25)).